The primary structure comprises 296 residues: Formamidopyrimidine-DNA glycosylase (296 aa).

P2 (schiff-base intermediate with DNA) is an active-site residue. E3 (proton donor) is an active-site residue. The active-site Proton donor; for beta-elimination activity is the K58. DNA-binding residues include H106, R125, and K167. An FPG-type zinc finger spans residues 258-294 (RVYDRVGLPCSRPGCAGAITRIVQANRSTFFCATCQP). Catalysis depends on R284, which acts as the Proton donor; for delta-elimination activity.

The protein belongs to the FPG family. As to quaternary structure, monomer. Requires Zn(2+) as cofactor.

The catalysed reaction is Hydrolysis of DNA containing ring-opened 7-methylguanine residues, releasing 2,6-diamino-4-hydroxy-5-(N-methyl)formamidopyrimidine.. It carries out the reaction 2'-deoxyribonucleotide-(2'-deoxyribose 5'-phosphate)-2'-deoxyribonucleotide-DNA = a 3'-end 2'-deoxyribonucleotide-(2,3-dehydro-2,3-deoxyribose 5'-phosphate)-DNA + a 5'-end 5'-phospho-2'-deoxyribonucleoside-DNA + H(+). Involved in base excision repair of DNA damaged by oxidation or by mutagenic agents. Acts as a DNA glycosylase that recognizes and removes damaged bases. Has a preference for oxidized purines, such as 7,8-dihydro-8-oxoguanine (8-oxoG). Has AP (apurinic/apyrimidinic) lyase activity and introduces nicks in the DNA strand. Cleaves the DNA backbone by beta-delta elimination to generate a single-strand break at the site of the removed base with both 3'- and 5'-phosphates. The sequence is that of Formamidopyrimidine-DNA glycosylase from Methylobacterium radiotolerans (strain ATCC 27329 / DSM 1819 / JCM 2831 / NBRC 15690 / NCIMB 10815 / 0-1).